A 66-amino-acid chain; its full sequence is Large ribosomal subunit protein bL35 (66 aa).

Positions 1-15 (MSKMKTKSGAKKRFK) are enriched in basic residues. Positions 1 to 35 (MSKMKTKSGAKKRFKLTASGKVKAGQAGKRHGMIK) are disordered.

It belongs to the bacterial ribosomal protein bL35 family.

This chain is Large ribosomal subunit protein bL35, found in Maricaulis maris (strain MCS10) (Caulobacter maris).